The primary structure comprises 145 residues: KKQCGVLEGLKVKSEWGRAYGSGHDREAFSQAIWRATFAQVPESRSLFKRVHGDDTSHPAFIAHAERVLGGLDIAISTLDQPATLKEELDHLQVQHEGRKIPDNYFDAFKTAILHVVAAQLGRCYDREAWDACIDHIEDGIKGHH.

The region spanning 3–145 is the Globin domain; it reads QCGVLEGLKV…HIEDGIKGHH (143 aa). The cysteines at positions 4 and 133 are disulfide-linked. His-96 provides a ligand contact to heme b.

The protein belongs to the globin family. As to quaternary structure, the extracellular hemoglobin of the earthworm consists of 12 subunits that have a hexagonal bilayer structure with a molecular weight near 3.8 million. Each one-twelfth subunit is composed primarily of disulfide linked trimers (chains A, B, and C) and monomers (chain D).

This Lumbricus terrestris (Common earthworm) protein is Extracellular globin-2.